Consider the following 72-residue polypeptide: Translation initiation factor IF-1 (72 aa).

Residues 1 to 72 (MAKEDNIEMQ…SKGRIVFRSR (72 aa)) form the S1-like domain.

The protein belongs to the IF-1 family. Component of the 30S ribosomal translation pre-initiation complex which assembles on the 30S ribosome in the order IF-2 and IF-3, IF-1 and N-formylmethionyl-tRNA(fMet); mRNA recruitment can occur at any time during PIC assembly.

The protein resides in the cytoplasm. Its function is as follows. One of the essential components for the initiation of protein synthesis. Stabilizes the binding of IF-2 and IF-3 on the 30S subunit to which N-formylmethionyl-tRNA(fMet) subsequently binds. Helps modulate mRNA selection, yielding the 30S pre-initiation complex (PIC). Upon addition of the 50S ribosomal subunit IF-1, IF-2 and IF-3 are released leaving the mature 70S translation initiation complex. This chain is Translation initiation factor IF-1, found in Klebsiella pneumoniae subsp. pneumoniae (strain ATCC 700721 / MGH 78578).